The primary structure comprises 362 residues: Serine/threonine-protein kinase SRK2E (362 aa).

Residues Ser7, Ser18, Ser29, and Ser43 each carry the phosphoserine; by autocatalysis modification. Residues 21–277 (YELVKDIGSG…IPEIRNHEWF (257 aa)) form the Protein kinase domain. 27–35 (IGSGNFGVA) lines the ATP pocket. Lys50 serves as a coordination point for ATP. Catalysis depends on Asp140, which acts as the Proton acceptor. Residues 160–186 (DFGYSKSSVLHSQPKSTVGTPAYIAPE) are activation loop. A Phosphoserine modification is found at Ser175. The interval 283–318 (ADLMNDNTMTTQFDESDQPGQSIEEIMQIIAEATVP) is domain I; osmotic stress response, required for the kinase activity. Residues 319–362 (PAGTQNLNHYLTGSLDIDDDMEEDLESDLDDLDIDSSGEIVYAM) form a domain II; ABA response and ABI1 binding region.

Belongs to the protein kinase superfamily. Ser/Thr protein kinase family. As to quaternary structure, interacts with ABI1, PP2CA and SLAC1. Interacts with B'ALPHA, B'BETA, B'DELTA, PP2AA2, PP2AA3, PP2A1 and PP2A2. Associates with MAPKKK18 within the nucleus. Interacts with I-2, TOPP1 and TOPP2. Interacts with ABI2. Autophosphorylation on residues Ser-7, Ser-18, Ser-29, Ser-43, Ser-175 and/or Thr-176. Only the phosphorylation of Ser-175 is crucial for the kinase activity. The phosphorylation of Ser-43 may repress the ABA signaling pathway in absence of ABA. Expressed in seedlings, leaves, flowers, stems, and roots, but restricted to guard cells and vascular tissue.

It localises to the nucleus. The enzyme catalyses L-seryl-[protein] + ATP = O-phospho-L-seryl-[protein] + ADP + H(+). It catalyses the reaction L-threonyl-[protein] + ATP = O-phospho-L-threonyl-[protein] + ADP + H(+). Its activity is regulated as follows. Kinase activity enhanced by ABA and low humidity. Repressed by PP2CA independently of its phosphatase activity. Probably inactivated by ABI1. Repressed by TOPP1. Negatively regulated by ABI2. Functionally, activator of the abscisic acid (ABA) signaling pathway that regulates numerous ABA responses, such as stomata closure in response to drought, darkness, high CO(2), plant pathogens, or decreases in atmospheric relative humidity (RH). Involved in the resistance to drought by avoiding water loss. Required for the stomata closure mediated by pathogen-associated molecular pattern (PAMPs) (e.g. flg22 and LPS) of pathogenic bacteria such as P.syringae pv. tomato (Pst) and E.coli O157:H7. As a plant defense process, stomata are closed transiently in order to limit invaders, but actively reopened by bacteria after a few hours; virulent strains (e.g. Pst DC3000) are more efficient than avirulent strains (e.g. Pst DC3000 AvrRpt2) in reopening stomata. Mediates the phosphorylation and activation of the S-type anion efflux channel SLAC1, and thus promotes stomata closure. Essential for stomatal closure in response to reactive oxygen species (ROS). Promotes MAPKKK18 activity upon abscisic acid (ABA) treatment. The chain is Serine/threonine-protein kinase SRK2E from Arabidopsis thaliana (Mouse-ear cress).